The primary structure comprises 484 residues: Protein phosphatase 1B (484 aa).

Residues 1-14 (MGAFLDKPKTEKHN) are compositionally biased toward basic and acidic residues. The tract at residues 1–20 (MGAFLDKPKTEKHNAHGAGN) is disordered. The N-myristoyl glycine moiety is linked to residue Gly2. A Glycyl lysine isopeptide (Lys-Gly) (interchain with G-Cter in ISG15) cross-link involves residue Lys12. The PPM-type phosphatase domain maps to 23-295 (RYGLSSMQGW…DNMSIVLVCF (273 aa)). The Mn(2+) site is built by Asp60 and Gly61. Lys142 is covalently cross-linked (Glycyl lysine isopeptide (Lys-Gly) (interchain with G-Cter in ISG15)). Residues Asp243 and Asp286 each contribute to the Mn(2+) site. At Ser391 the chain carries Phosphoserine. The segment at 431–484 (EENPAEQAATAASSNSDAGNTVAMQESHTESKSDLAELDSCTEDAGTKMSGEKL) is disordered. The span at 440-456 (TAASSNSDAGNTVAMQE) shows a compositional bias: polar residues.

Belongs to the PP2C family. Monomer. Interacts with PAK6. Interacts with the phosphorylated form of IKBKB/IKKB. Mg(2+) is required as a cofactor. It depends on Mn(2+) as a cofactor. Isgylation negatively regulates its activity. In terms of processing, N-myristoylation is essential for the recognition of its substrates for dephosphorylation.

The protein resides in the cytoplasm. It localises to the cytosol. It is found in the membrane. It carries out the reaction O-phospho-L-seryl-[protein] + H2O = L-seryl-[protein] + phosphate. It catalyses the reaction O-phospho-L-threonyl-[protein] + H2O = L-threonyl-[protein] + phosphate. Its function is as follows. Enzyme with a broad specificity. Dephosphorylates PRKAA1 and PRKAA2. Inhibits TBK1-mediated antiviral signaling by dephosphorylating it at 'Ser-172'. Plays an important role in the termination of TNF-alpha-mediated NF-kappa-B activation through dephosphorylating and inactivating IKBKB/IKKB. This chain is Protein phosphatase 1B (PPM1B), found in Bos taurus (Bovine).